A 173-amino-acid chain; its full sequence is Pathogenesis-related protein 1C (173 aa).

The N-terminal stretch at 1–20 (MSTSAVLFLLLAVFAAGASA) is a signal peptide.

The protein belongs to the thaumatin family.

This is Pathogenesis-related protein 1C from Hordeum vulgare (Barley).